Here is a 184-residue protein sequence, read N- to C-terminus: MKVIAVTGYKPFELGIFKNDHPGVECIKKALRRKLTAFVEDGLEWVIISGQLGVELWAAEVVFEIQVEYPDLKLAVFTPFLEQEEGWKEDNREYYEFILSQADHVDSITKRKYESPEQFKLKNQFFIEKSDALLAVYDEEKPGSPKYIVEAAKKKGEIENYHSYFILFSDLQDIIEEEQWNNAE.

This sequence belongs to the UPF0398 family.

The polypeptide is UPF0398 protein BALH_1408 (Bacillus thuringiensis (strain Al Hakam)).